A 274-amino-acid polypeptide reads, in one-letter code: Bis(5'-nucleosyl)-tetraphosphatase, symmetrical (274 aa).

This sequence belongs to the Ap4A hydrolase family.

It carries out the reaction P(1),P(4)-bis(5'-adenosyl) tetraphosphate + H2O = 2 ADP + 2 H(+). In terms of biological role, hydrolyzes diadenosine 5',5'''-P1,P4-tetraphosphate to yield ADP. The polypeptide is Bis(5'-nucleosyl)-tetraphosphatase, symmetrical (Shewanella sp. (strain ANA-3)).